Consider the following 834-residue polypeptide: MEEKTQIKTFLGSKLPKYGTKSVRSTLQPMPNGTPVNLLGTSKNSNVKSYIKNNGSDCPSSHSFNWRKANKYQLCAQGVEEPNNTQNSHDKIIDPEKRVPTQGMFDKNGIKGGLKSVSLFTSKLAKPSTMFVSSTEELNQKSFSGPSNLGKFTKGTLLGRTSYSSINTPKSQLNGFYGNRSAGSMQRPRANSCATRSSSGESLAQSPDSSKSINCEKMVRSQSFSHSIQNSFLPPSSITRSHSFNRAVDLTKPYQNQQLSIRVPLRSSMLTRNSRQPEVLNGNEHLGYGFNRPYAAGGKKLALPNGPGVTSTLGYRMVHPSLLKSSRSPFSGTMTVDGNKNSPADTCVEEDATVLAKDRAANKDQELIENESYRTKNNQTMKHDAKMRYLSDDVDDISLSSLSSSDKNDLSEDFSDDFIDIEDSNRTRITPEEMSLKEEKHENGPPQDMFDSPKENEKAFSKTDEWIDISVSDRSECTKHTSGNNLVSPDTDYRAGSSFELSPSDSSDGTYMWDEEGLEPIGNVHPVGSYESSEMNSIDILNNLESCDLEDDDLMLDVDLPEDAPLENVECDNMNRFDRPDRNVRQPQEGFWKRPPQRWSGQEHYHLSHPDHYHHHGKSDLSRGSPYRESPLGHFESYGGMPFFQAQKMFVDVPENTVILDEMTLRHMVQDCTAVKTQLLKLKRLLHQHDGSGSLHDIQLSLPSSPEPEDGDKVYKNEDLLNEIKQLKDEIKKKDEKIQLLELQLATQHICHQKCKEEKCTYADKYTQTPWRRIPGGYSAPSFSPWQGSFQGIPRTVPPHRRQTSSTTAFQQPSQTHRSHPGKTNKATTYRGPQ.

Positions 169–212 (PKSQLNGFYGNRSAGSMQRPRANSCATRSSSGESLAQSPDSSKS) are disordered. The segment covering 192 to 212 (SCATRSSSGESLAQSPDSSKS) has biased composition (polar residues). Ser223 carries the post-translational modification Phosphoserine. Basic and acidic residues predominate over residues 426–443 (RTRITPEEMSLKEEKHEN). 5 disordered regions span residues 426–454 (RTRI…DSPK), 477–509 (CTKH…SSDG), 573–628 (NMNR…SPYR), 695–714 (LHDI…GDKV), and 780–834 (APSF…RGPQ). Ser452 is subject to Phosphoserine. Over residues 497-507 (SSFELSPSDSS) the composition is skewed to low complexity. 2 stretches are compositionally biased toward basic and acidic residues: residues 573-584 (NMNRFDRPDRNV) and 601-611 (GQEHYHLSHPD). The stretch at 712–749 (DKVYKNEDLLNEIKQLKDEIKKKDEKIQLLELQLATQH) forms a coiled coil. 2 stretches are compositionally biased toward polar residues: residues 781–790 (PSFSPWQGSF) and 804–816 (TSST…PSQT).

It belongs to the CCSER family.

Its subcellular location is the cytoplasm. The protein localises to the cytoskeleton. In terms of biological role, microtubule-binding protein which might play a role in microtubule bundling. The chain is Serine-rich coiled-coil domain-containing protein 2 (CCSER2) from Homo sapiens (Human).